A 365-amino-acid chain; its full sequence is Putrescine carbamoyltransferase (365 aa).

Carbamoyl phosphate-binding positions include 54-58 (STRTR), Arg-105, and His-132. 277–280 (HCLP) contributes to the putrescine binding site.

The protein belongs to the aspartate/ornithine carbamoyltransferase superfamily. PTCase family. In terms of assembly, homotrimer.

Its subcellular location is the cytoplasm. The catalysed reaction is carbamoyl phosphate + putrescine = N-carbamoylputrescine + phosphate + H(+). The protein operates within amine and polyamine biosynthesis; putrescine biosynthesis via agmatine pathway; putrescine from N-carbamoylputrescine (transferase route): step 1/1. Functionally, catalyzes the phosphorolysis of N-carbamoylputrescine to form carbamoyl phosphate and putrescine. Is involved in the degradation pathway of the polyamine agmatine. This Mycoplasma mycoides subsp. mycoides SC (strain CCUG 32753 / NCTC 10114 / PG1) protein is Putrescine carbamoyltransferase.